A 109-amino-acid chain; its full sequence is Serine protease inhibitor (109 aa).

An N-terminal signal peptide occupies residues 1 to 28; it reads MKMKLLQVHFVLLVSSSFLLGYTGMVTA. Disulfide bonds link C43–C83, C52–C79, C58–C73, C62–C104, and C85–C98. In terms of domain architecture, TIL spans 43–104; sequence CRENEIFSQC…QGVCILENSC (62 aa).

Belongs to the serine protease inhibitor-like (TIL domain-containing) family. In terms of tissue distribution, ubiquitously expressed (at protein level), including in venom glands. Found more precisely in the epidermis, fat body, gut, muscle, and venom of worker bees.

The protein resides in the secreted. Functionally, dual role peptide that functions as a broad-spectrum antimicrobial peptide and antifibrinolytic toxin. Inhibits trypsin (IC(50)=375 nM), plasmin (IC(50)=2140 nM), and microbial serine proteases (subtilisin A (IC(50)=294 nM) and proteinase K (IC(50)=459 nM)). Exhibits antifibrinolytic activity by binding and inhibiting plasmin. Does not inhibit chymotrypsin, elastase or thrombin. Binds to microbial cell wall carbohydrates (LPS, mannan and N-acetyl-D-glucosamine) and shows antimicrobial activity (MIC=4.1 uM against B.thuringiensis, MIC=4.95 uM against E.coli, MIC=9.6 uM against the fungus B.bassiana). Does not show hemolytic activity. The polypeptide is Serine protease inhibitor (Bombus ignitus (Bumblebee)).